The sequence spans 424 residues: UDP-N-acetylglucosamine 1-carboxyvinyltransferase (424 aa).

22–23 (KN) is a phosphoenolpyruvate binding site. Arginine 93 serves as a coordination point for UDP-N-acetyl-alpha-D-glucosamine. Cysteine 117 acts as the Proton donor in catalysis. Cysteine 117 bears the 2-(S-cysteinyl)pyruvic acid O-phosphothioketal mark. UDP-N-acetyl-alpha-D-glucosamine contacts are provided by residues 122–126 (RPVDL), 164–166 (SVG), aspartate 307, and isoleucine 329.

This sequence belongs to the EPSP synthase family. MurA subfamily.

Its subcellular location is the cytoplasm. The enzyme catalyses phosphoenolpyruvate + UDP-N-acetyl-alpha-D-glucosamine = UDP-N-acetyl-3-O-(1-carboxyvinyl)-alpha-D-glucosamine + phosphate. Its pathway is cell wall biogenesis; peptidoglycan biosynthesis. In terms of biological role, cell wall formation. Adds enolpyruvyl to UDP-N-acetylglucosamine. In Haemophilus influenzae (strain ATCC 51907 / DSM 11121 / KW20 / Rd), this protein is UDP-N-acetylglucosamine 1-carboxyvinyltransferase.